The chain runs to 392 residues: Hercynylcysteine sulfoxide lyase (392 aa).

Lys219 bears the N6-(pyridoxal phosphate)lysine mark.

This sequence belongs to the class-V pyridoxal-phosphate-dependent aminotransferase family. EgtE subfamily. The cofactor is pyridoxal 5'-phosphate.

It localises to the cytoplasm. The protein resides in the nucleus. The enzyme catalyses S-(hercyn-2-yl)-L-cysteine S-oxide + AH2 + H(+) = ergothioneine + pyruvate + A + NH4(+). It participates in amino-acid biosynthesis; ergothioneine biosynthesis. Catalyzes the conversion of hercynylcysteine sulfoxide to ergothioneine by cleaving the cysteine residue at the sulfur atom, the last step in the biosynthesis pathway of ergothioneine. This chain is Hercynylcysteine sulfoxide lyase, found in Schizosaccharomyces pombe (strain 972 / ATCC 24843) (Fission yeast).